Reading from the N-terminus, the 584-residue chain is Galectin-3-binding protein (584 aa).

Positions 1–18 are cleaved as a signal peptide; it reads MTPPRLFWVWLLVAGTQG. The SRCR domain occupies 24–124; that stretch reads MRLADGGATN…HERDAGVVCT (101 aa). Disulfide bonds link Cys49/Cys113, Cys62/Cys123, and Cys93/Cys103. Asn69 carries an N-linked (GlcNAc...) asparagine glycan. 2 N-linked (GlcNAc...) asparagine glycosylation sites follow: Asn125 and Asn192. One can recognise a BTB domain in the interval 153–221; sequence CDLSISVNVQ…FYSRRIDITL (69 aa). Residues 260–359 form the BACK domain; that stretch reads PLDLYAYAVA…MLPEELFELQ (100 aa). N-linked (GlcNAc...) asparagine glycosylation is found at Asn361, Asn397, Asn550, and Asn579.

As to quaternary structure, homodimers and homomultimers. The multimers form ring-like structures with a diameter of 30-40 nm. Binds LGALS1 and LGALS3. Binds ITGB1, COL4A1, COL5A1, COL6A1, FN1 and NID. Interacts with the gamma-tubulin ring complex (gamma-TuRC), composed of gamma-tubulin, TUBGCP2, TUBGCP3, TUBGCP4, TUBGCP5 and TUBGCP6. The unglycosylated form interacts with PDE4DIP; this interaction, which is PDE4DIP isoform-specific, may connect a pericentrosomal complex, made of AKAP9, CDK5RAP2, EB1/MAPRE1 and PDE4DIP, to the gamma-tubulin ring complex (gamma-TuRC) to promote microtubule assembly and acetylation.

It is found in the secreted. The protein resides in the extracellular space. It localises to the extracellular matrix. In terms of biological role, promotes integrin-mediated cell adhesion. May stimulate host defense against viruses and tumor cells. In Pongo abelii (Sumatran orangutan), this protein is Galectin-3-binding protein (LGALS3BP).